We begin with the raw amino-acid sequence, 155 residues long: NADPH-dependent 7-cyano-7-deazaguanine reductase (155 aa).

Residues M1–A20 show a composition bias toward polar residues. The disordered stretch occupies residues M1–A26. C53 functions as the Thioimide intermediate in the catalytic mechanism. D60 (proton donor) is an active-site residue. Substrate-binding positions include V75 to S77 and H94 to E95.

Belongs to the GTP cyclohydrolase I family. QueF type 1 subfamily.

The protein localises to the cytoplasm. It carries out the reaction 7-aminomethyl-7-carbaguanine + 2 NADP(+) = 7-cyano-7-deazaguanine + 2 NADPH + 3 H(+). It functions in the pathway tRNA modification; tRNA-queuosine biosynthesis. Catalyzes the NADPH-dependent reduction of 7-cyano-7-deazaguanine (preQ0) to 7-aminomethyl-7-deazaguanine (preQ1). In Rhizobium etli (strain CIAT 652), this protein is NADPH-dependent 7-cyano-7-deazaguanine reductase.